A 1692-amino-acid chain; its full sequence is Protein TOPAZ1 (1692 aa).

Disordered stretches follow at residues 1–135, 600–629, and 894–919; these read MRRP…PGLD, ELSR…TGNK, and EPNV…EPSD. A compositionally biased stretch (gly residues) spans 31-40; it reads GAAGGCGPEA. Residues 95 to 116 are compositionally biased toward basic and acidic residues; the sequence is SDPRGLEAAKEAELPLQTERHT. The span at 608 to 627 shows a compositional bias: polar residues; it reads VISNTTEDTQLTSETQSLTG. Basic and acidic residues predominate over residues 902–919; the sequence is QSTDSKYMETPVKKEPSD.

It is found in the cytoplasm. It localises to the cytosol. Functionally, important for normal spermatogenesis and male fertility. Specifically required for progression to the post-meiotic stages of spermatocyte development. Seems to be necessary for normal expression levels of a number of testis-expressed gene transcripts, although its role in this process is unclear. This chain is Protein TOPAZ1 (TOPAZ1), found in Homo sapiens (Human).